A 232-amino-acid chain; its full sequence is Ubiquinone biosynthesis O-methyltransferase (232 aa).

Residues Arg-36, Gly-55, Asp-76, and Leu-120 each contribute to the S-adenosyl-L-methionine site.

The protein belongs to the methyltransferase superfamily. UbiG/COQ3 family.

It carries out the reaction a 3-demethylubiquinol + S-adenosyl-L-methionine = a ubiquinol + S-adenosyl-L-homocysteine + H(+). It catalyses the reaction a 3-(all-trans-polyprenyl)benzene-1,2-diol + S-adenosyl-L-methionine = a 2-methoxy-6-(all-trans-polyprenyl)phenol + S-adenosyl-L-homocysteine + H(+). It functions in the pathway cofactor biosynthesis; ubiquinone biosynthesis. In terms of biological role, O-methyltransferase that catalyzes the 2 O-methylation steps in the ubiquinone biosynthetic pathway. This is Ubiquinone biosynthesis O-methyltransferase from Pseudomonas aeruginosa (strain UCBPP-PA14).